Consider the following 267-residue polypeptide: Undecaprenyl-diphosphatase (267 aa).

Transmembrane regions (helical) follow at residues 1-21, 40-60, 85-105, 112-132, 188-208, 219-239, and 245-265; these read MPLL…FLPV, GQAI…LFFW, LALG…FLYF, LRSV…LYIA, IAML…GTEV, DMGI…ALMM, and VSFT…LFIA.

It belongs to the UppP family.

The protein resides in the cell inner membrane. It carries out the reaction di-trans,octa-cis-undecaprenyl diphosphate + H2O = di-trans,octa-cis-undecaprenyl phosphate + phosphate + H(+). In terms of biological role, catalyzes the dephosphorylation of undecaprenyl diphosphate (UPP). Confers resistance to bacitracin. This Ruegeria sp. (strain TM1040) (Silicibacter sp.) protein is Undecaprenyl-diphosphatase.